Reading from the N-terminus, the 579-residue chain is F-box protein At5g39450 (579 aa).

An F-box domain is found at 16 to 62 (TCLLLSLPEDVIAVIARFVSPRDICNLSLCCKSLCDVVDSERIWLVQ).

The protein is F-box protein At5g39450 of Arabidopsis thaliana (Mouse-ear cress).